A 249-amino-acid polypeptide reads, in one-letter code: MAARRSQRRRGRRGEPGTALLVPLALGLGLALACLGLLLAVVSLGSRASLSAQEPAQEELVAEEDQDPSELNPQTEESQDPAPFLNRLVRPRRSAPKGRKTRARRAIAAHYEVHPRPGQDGAQAGVDGTVSGWEEARINSSSPLRYNRQIGEFIVTRAGLYYLYCQVHFDEGKAVYLKLDLLVDGVLALRCLEEFSATAASSLGPQLRLCQVSGLLALRPGSSLRIRTLPWAHLKAAPFLTYFGLFQVH.

The Cytoplasmic segment spans residues 1–21 (MAARRSQRRRGRRGEPGTALL). The chain crosses the membrane as a helical; Signal-anchor for type II membrane protein span at residues 22–42 (VPLALGLGLALACLGLLLAVV). Over 43–249 (SLGSRASLSA…LTYFGLFQVH (207 aa)) the chain is Extracellular. The tract at residues 55 to 85 (PAQEELVAEEDQDPSELNPQTEESQDPAPFL) is disordered. The span at 56-68 (AQEELVAEEDQDP) shows a compositional bias: acidic residues. The THD domain occupies 107-248 (IAAHYEVHPR…FLTYFGLFQV (142 aa)). N139 carries N-linked (GlcNAc...) asparagine glycosylation. Residues C191 and C210 are joined by a disulfide bond.

It belongs to the tumor necrosis factor family. Homotrimer. Interacts with the angiogenic factor AGGF1/VG5Q. The soluble form derives from the membrane form by proteolytic processing. As to expression, highly expressed in adult heart, pancreas, skeletal muscle, brain, colon, small intestine, lung, ovary, prostate, spleen, lymph node, appendix and peripheral blood lymphocytes. Low expression in kidney, testis, liver, placenta, thymus and bone marrow. Also detected in fetal kidney, liver, lung and brain.

The protein localises to the cell membrane. It localises to the secreted. Binds to FN14 and possibly also to TNRFSF12/APO3. Weak inducer of apoptosis in some cell types. Mediates NF-kappa-B activation. Promotes angiogenesis and the proliferation of endothelial cells. Also involved in induction of inflammatory cytokines. Promotes IL8 secretion. This chain is Tumor necrosis factor ligand superfamily member 12 (TNFSF12), found in Homo sapiens (Human).